The sequence spans 424 residues: Tyrosine--tRNA ligase (424 aa).

Residue Tyr-37 coordinates L-tyrosine. Positions 42–51 (PTADSLHLGH) match the 'HIGH' region motif. Lys-144 carries the N6-acetyllysine modification. L-tyrosine is bound by residues Tyr-175 and Gln-179. The 'KMSKS' region signature appears at 235–239 (KFGKT). Residue Lys-238 coordinates ATP. Residues 357-414 (ADLMQALVDSELQPSRGQARKTIASNAITINGEKQSDPEYFFKEEDRLFGRFTLLRRG) form the S4 RNA-binding domain.

The protein belongs to the class-I aminoacyl-tRNA synthetase family. TyrS type 1 subfamily. As to quaternary structure, homodimer.

The protein resides in the cytoplasm. It catalyses the reaction tRNA(Tyr) + L-tyrosine + ATP = L-tyrosyl-tRNA(Tyr) + AMP + diphosphate + H(+). Catalyzes the attachment of tyrosine to tRNA(Tyr) in a two-step reaction: tyrosine is first activated by ATP to form Tyr-AMP and then transferred to the acceptor end of tRNA(Tyr). The sequence is that of Tyrosine--tRNA ligase from Shigella dysenteriae serotype 1 (strain Sd197).